Consider the following 284-residue polypeptide: Nucleotide-binding protein Sbal223_0704 (284 aa).

8–15 is an ATP binding site; the sequence is GRSGSGKS. A GTP-binding site is contributed by 56-59; the sequence is DVRN.

Belongs to the RapZ-like family.

In terms of biological role, displays ATPase and GTPase activities. This is Nucleotide-binding protein Sbal223_0704 from Shewanella baltica (strain OS223).